The chain runs to 331 residues: GTPase Obg (331 aa).

Residues 1-159 (MHFIDEVKIY…MWIHLRLKLL (159 aa)) enclose the Obg domain. Positions 160-327 (SDVGLIGLPN…IVKLALEIIK (168 aa)) constitute an OBG-type G domain. Residues 166–173 (GLPNAGKS), 191–195 (FTTLV), 212–215 (DIPG), 279–282 (NKCD), and 308–310 (STY) contribute to the GTP site. Mg(2+) is bound by residues Ser173 and Thr193.

It belongs to the TRAFAC class OBG-HflX-like GTPase superfamily. OBG GTPase family. Monomer. Mg(2+) is required as a cofactor.

It localises to the cytoplasm. In terms of biological role, an essential GTPase which binds GTP, GDP and possibly (p)ppGpp with moderate affinity, with high nucleotide exchange rates and a fairly low GTP hydrolysis rate. Plays a role in control of the cell cycle, stress response, ribosome biogenesis and in those bacteria that undergo differentiation, in morphogenesis control. In Rickettsia prowazekii (strain Madrid E), this protein is GTPase Obg.